Reading from the N-terminus, the 320-residue chain is Malate dehydrogenase (320 aa).

Residues Gly10–Gly15 and Asp34 contribute to the NAD(+) site. Substrate contacts are provided by Arg83 and Arg89. NAD(+) contacts are provided by residues Asn96 and Ile119 to Asn121. Asn121 and Arg152 together coordinate substrate. His176 functions as the Proton acceptor in the catalytic mechanism.

The protein belongs to the LDH/MDH superfamily. MDH type 3 family.

It carries out the reaction (S)-malate + NAD(+) = oxaloacetate + NADH + H(+). Catalyzes the reversible oxidation of malate to oxaloacetate. This chain is Malate dehydrogenase, found in Rhizobium johnstonii (strain DSM 114642 / LMG 32736 / 3841) (Rhizobium leguminosarum bv. viciae).